A 271-amino-acid polypeptide reads, in one-letter code: Peroxisomal biogenesis factor 2 (271 aa).

The Peroxisomal matrix portion of the chain corresponds to 1–2 (MS). Residues 3-29 (RVAQLDSIALDKELYGQFWSEFNAAFN) traverse the membrane as a helical segment. The Cytoplasmic portion of the chain corresponds to 30 to 33 (TSEH). A helical membrane pass occupies residues 34-60 (KEEWELALNTVVFMCATRFLPHYGSSC). Over 61–77 (TYGSALSGVVFQCRKRT) the chain is Peroxisomal matrix. Residues 78–97 (LYVVTVLAGYVWKKITHIIF) form a helical membrane-spanning segment. The Cytoplasmic segment spans residues 98–101 (NGPH). The chain crosses the membrane as a helical span at residues 102-133 (CGNQMMWLKLYKWVNLLYHGCDVTNFLRFLAA). At 134–175 (EGPNARAFLSPLYRAFNVHSTRLIRDGSAIASEFYSNSVFAG) the chain is on the peroxisomal matrix side. The chain crosses the membrane as a helical span at residues 176–197 (LEYQNRQLLWNALLELFSNTLL). The Cytoplasmic portion of the chain corresponds to 198-271 (TKRGLLTFVK…SGRLTASPVY (74 aa)). Zn(2+) contacts are provided by Cys222, Cys225, Cys237, Cys238, Cys243, Cys246, Cys256, and Cys259. An RING-type zinc finger spans residues 222-259 (CPRCGGFPTNPYQIACCRANYCYVCVVKALEWSMCDAC).

Belongs to the pex2/pex10/pex12 family. Component of the PEX2-PEX10-PEX12 retrotranslocation channel, composed of PEX2, PEX10 and PEX12.

The protein localises to the peroxisome membrane. It carries out the reaction [E2 ubiquitin-conjugating enzyme]-S-ubiquitinyl-L-cysteine + [acceptor protein]-L-cysteine = [E2 ubiquitin-conjugating enzyme]-L-cysteine + [acceptor protein]-S-ubiquitinyl-L-cysteine.. It participates in protein modification; protein ubiquitination. In terms of biological role, E3 ubiquitin-protein ligase component of a retrotranslocation channel required for peroxisome organization by mediating export of the PEX5 receptor from peroxisomes to the cytosol, thereby promoting PEX5 recycling. The retrotranslocation channel is composed of PEX2, PEX10 and PEX12; each subunit contributing transmembrane segments that coassemble into an open channel that specifically allows the passage of PEX5 through the peroxisomal membrane. PEX2 also regulates peroxisome organization by acting as a E3 ubiquitin-protein ligase. PEX2 ubiquitinates PEX5 during its passage through the retrotranslocation channel: catalyzes monoubiquitination of PEX5 at 'Cys-6', a modification that acts as a signal for PEX5 extraction into the cytosol. The chain is Peroxisomal biogenesis factor 2 from Saccharomyces cerevisiae (strain ATCC 204508 / S288c) (Baker's yeast).